The primary structure comprises 362 residues: 3-isopropylmalate dehydrogenase (362 aa).

75–88 (GPKWANLPPTEQPE) lines the NAD(+) pocket. Substrate-binding residues include Arg-96, Arg-106, Arg-135, and Asp-224. Mg(2+) is bound by residues Asp-224, Asp-248, and Asp-252. An NAD(+)-binding site is contributed by 282 to 294 (GSAPDIAGLGVAN).

This sequence belongs to the isocitrate and isopropylmalate dehydrogenases family. LeuB type 1 subfamily. Homodimer. It depends on Mg(2+) as a cofactor. Requires Mn(2+) as cofactor.

Its subcellular location is the cytoplasm. The catalysed reaction is (2R,3S)-3-isopropylmalate + NAD(+) = 4-methyl-2-oxopentanoate + CO2 + NADH. Its pathway is amino-acid biosynthesis; L-leucine biosynthesis; L-leucine from 3-methyl-2-oxobutanoate: step 3/4. Functionally, catalyzes the oxidation of 3-carboxy-2-hydroxy-4-methylpentanoate (3-isopropylmalate) to 3-carboxy-4-methyl-2-oxopentanoate. The product decarboxylates to 4-methyl-2 oxopentanoate. This is 3-isopropylmalate dehydrogenase from Colwellia psychrerythraea (strain 34H / ATCC BAA-681) (Vibrio psychroerythus).